Consider the following 324-residue polypeptide: Acetyl-coenzyme A carboxylase carboxyl transferase subunit alpha (324 aa).

One can recognise a CoA carboxyltransferase C-terminal domain in the interval 41-291 (RLDRLKEKIY…QEYVLQEWLK (251 aa)).

Belongs to the AccA family. As to quaternary structure, acetyl-CoA carboxylase is a heterohexamer composed of biotin carboxyl carrier protein (AccB), biotin carboxylase (AccC) and two subunits each of ACCase subunit alpha (AccA) and ACCase subunit beta (AccD).

The protein localises to the cytoplasm. It catalyses the reaction N(6)-carboxybiotinyl-L-lysyl-[protein] + acetyl-CoA = N(6)-biotinyl-L-lysyl-[protein] + malonyl-CoA. It functions in the pathway lipid metabolism; malonyl-CoA biosynthesis; malonyl-CoA from acetyl-CoA: step 1/1. Component of the acetyl coenzyme A carboxylase (ACC) complex. First, biotin carboxylase catalyzes the carboxylation of biotin on its carrier protein (BCCP) and then the CO(2) group is transferred by the carboxyltransferase to acetyl-CoA to form malonyl-CoA. The chain is Acetyl-coenzyme A carboxylase carboxyl transferase subunit alpha from Chlamydia muridarum (strain MoPn / Nigg).